A 408-amino-acid chain; its full sequence is Peptidase T (408 aa).

The tract at residues 1 to 28 (MKNQLIDRLTRYTTIDTQSDPKSTTTPS) is disordered. Over residues 11–28 (RYTTIDTQSDPKSTTTPS) the composition is skewed to polar residues. Histidine 78 provides a ligand contact to Zn(2+). Aspartate 80 is a catalytic residue. Aspartate 140 is a Zn(2+) binding site. Glutamate 174 functions as the Proton acceptor in the catalytic mechanism. Zn(2+) is bound by residues glutamate 175, aspartate 197, and histidine 379.

This sequence belongs to the peptidase M20B family. It depends on Zn(2+) as a cofactor.

The protein localises to the cytoplasm. It carries out the reaction Release of the N-terminal residue from a tripeptide.. Cleaves the N-terminal amino acid of tripeptides. The protein is Peptidase T of Staphylococcus aureus (strain USA300 / TCH1516).